Reading from the N-terminus, the 544-residue chain is Methyl-accepting chemotaxis protein McpP (544 aa).

3 helical membrane passes run 12–32, 50–70, and 192–212; these read RLWLILVVAVAMLVVLGLLML, VVQTAAGVLAYYQGLEAAGTL, and DASLVGVGIALLMALVVMLIA. In terms of domain architecture, HAMP spans 213–267; sequence RSIARPLQEAVQAMGNIASGESDLTRRLDTHGSDEITHLGEHFNRFNGKLQGVVG. The Methyl-accepting transducer domain occupies 272–508; that stretch reads AAHALAQSAG…EINRNVLDTA (237 aa).

The protein belongs to the methyl-accepting chemotaxis (MCP) protein family.

Its subcellular location is the cell membrane. In terms of biological role, chemotactic-signal transducers respond to changes in the concentration of attractants and repellents in the environment, transduce a signal from the outside to the inside of the cell, and facilitate sensory adaptation through the variation of the level of methylation. McpP is a chemoreceptor that responds specifically to some C2 and C3 carboxylic acids. Recognizes acetate, pyruvate, propionate, and L-lactate. This is Methyl-accepting chemotaxis protein McpP from Pseudomonas putida (strain ATCC 47054 / DSM 6125 / CFBP 8728 / NCIMB 11950 / KT2440).